A 221-amino-acid polypeptide reads, in one-letter code: PKHD-type hydroxylase A9601_13531 (221 aa).

In terms of domain architecture, Fe2OG dioxygenase spans 80-174; that stretch reads LIHGIMFTKS…RIVCVGWIES (95 aa). Histidine 98, aspartate 100, and histidine 155 together coordinate Fe cation. Residue arginine 165 coordinates 2-oxoglutarate.

It depends on Fe(2+) as a cofactor. The cofactor is L-ascorbate.

This chain is PKHD-type hydroxylase A9601_13531, found in Prochlorococcus marinus (strain AS9601).